The following is a 275-amino-acid chain: 3-methyl-2-oxobutanoate hydroxymethyltransferase (275 aa).

Residues D51 and D90 each coordinate Mg(2+). 3-methyl-2-oxobutanoate is bound by residues 51–52, D90, and K120; that span reads DS. Residue E122 participates in Mg(2+) binding. E189 functions as the Proton acceptor in the catalytic mechanism.

Belongs to the PanB family. In terms of assembly, homodecamer; pentamer of dimers. Mg(2+) serves as cofactor.

Its subcellular location is the cytoplasm. It catalyses the reaction 3-methyl-2-oxobutanoate + (6R)-5,10-methylene-5,6,7,8-tetrahydrofolate + H2O = 2-dehydropantoate + (6S)-5,6,7,8-tetrahydrofolate. Its pathway is cofactor biosynthesis; (R)-pantothenate biosynthesis; (R)-pantoate from 3-methyl-2-oxobutanoate: step 1/2. In terms of biological role, catalyzes the reversible reaction in which hydroxymethyl group from 5,10-methylenetetrahydrofolate is transferred onto alpha-ketoisovalerate to form ketopantoate. The chain is 3-methyl-2-oxobutanoate hydroxymethyltransferase from Caulobacter vibrioides (strain ATCC 19089 / CIP 103742 / CB 15) (Caulobacter crescentus).